Reading from the N-terminus, the 426-residue chain is Coiled-coil domain-containing protein 86 (426 aa).

The interval 1 to 426 (MDTPLRRSRR…QPPQRPVAKV (426 aa)) is disordered. At serine 18 the chain carries Phosphoserine. Positions 33–49 (ALVDFKSNSEETGELKS) are enriched in basic and acidic residues. Residues 55–145 (LSLPSPGPQP…SLPSPGPQPE (91 aa)) show a composition bias toward pro residues. The residue at position 59 (serine 59) is a Phosphoserine. Threonine 66 carries the phosphothreonine modification. A phosphoserine mark is found at serine 67, serine 70, serine 161, serine 172, serine 183, serine 191, serine 194, serine 225, serine 252, serine 253, and serine 283. A compositionally biased stretch (polar residues) spans 241 to 255 (QPAQELTVQAPSSPE). The span at 304–320 (GKPKSGRVWKDRSKKRF) shows a compositional bias: basic residues. Residues 339-383 (ERQERKLAKDFARHLEEEKQRRRQEKKERRAENLRRRLENERKAE) show a composition bias toward basic and acidic residues. Residues 346 to 389 (AKDFARHLEEEKQRRRQEKKERRAENLRRRLENERKAEIVQVIR) adopt a coiled-coil conformation. Over residues 392-402 (AKLKKAKKKQL) the composition is skewed to basic residues. Arginine 408 is modified (citrulline).

Citrullinated by PADI4. As to expression, highly expressed in testis. Also expressed in heart, liver, kidney.

It is found in the nucleus. The protein resides in the chromosome. Its subcellular location is the nucleolus. Functionally, required for proper chromosome segregation during mitosis and error-free mitotic progression. In Mus musculus (Mouse), this protein is Coiled-coil domain-containing protein 86.